The following is a 205-amino-acid chain: Thiamine-phosphate synthase (205 aa).

4-amino-2-methyl-5-(diphosphooxymethyl)pyrimidine-binding positions include 34-38 (QLRCK) and N66. Mg(2+)-binding residues include D67 and D86. S105 serves as a coordination point for 4-amino-2-methyl-5-(diphosphooxymethyl)pyrimidine. 131–133 (TTT) lines the 2-[(2R,5Z)-2-carboxy-4-methylthiazol-5(2H)-ylidene]ethyl phosphate pocket. K134 is a 4-amino-2-methyl-5-(diphosphooxymethyl)pyrimidine binding site. A 2-[(2R,5Z)-2-carboxy-4-methylthiazol-5(2H)-ylidene]ethyl phosphate-binding site is contributed by G163.

The protein belongs to the thiamine-phosphate synthase family. The cofactor is Mg(2+).

It catalyses the reaction 2-[(2R,5Z)-2-carboxy-4-methylthiazol-5(2H)-ylidene]ethyl phosphate + 4-amino-2-methyl-5-(diphosphooxymethyl)pyrimidine + 2 H(+) = thiamine phosphate + CO2 + diphosphate. The catalysed reaction is 2-(2-carboxy-4-methylthiazol-5-yl)ethyl phosphate + 4-amino-2-methyl-5-(diphosphooxymethyl)pyrimidine + 2 H(+) = thiamine phosphate + CO2 + diphosphate. It carries out the reaction 4-methyl-5-(2-phosphooxyethyl)-thiazole + 4-amino-2-methyl-5-(diphosphooxymethyl)pyrimidine + H(+) = thiamine phosphate + diphosphate. The protein operates within cofactor biosynthesis; thiamine diphosphate biosynthesis; thiamine phosphate from 4-amino-2-methyl-5-diphosphomethylpyrimidine and 4-methyl-5-(2-phosphoethyl)-thiazole: step 1/1. Functionally, condenses 4-methyl-5-(beta-hydroxyethyl)thiazole monophosphate (THZ-P) and 2-methyl-4-amino-5-hydroxymethyl pyrimidine pyrophosphate (HMP-PP) to form thiamine monophosphate (TMP). The sequence is that of Thiamine-phosphate synthase from Neisseria gonorrhoeae (strain ATCC 700825 / FA 1090).